Consider the following 242-residue polypeptide: Uridylate kinase (242 aa).

Position 11-14 (11-14 (KLSG)) interacts with ATP. Residues 19–24 (GEKGVG) form an involved in allosteric activation by GTP region. Glycine 53 provides a ligand contact to UMP. Positions 54 and 58 each coordinate ATP. Residues aspartate 73 and 134-141 (IGSPYFST) each bind UMP. Residues asparagine 162, tyrosine 168, and aspartate 171 each contribute to the ATP site.

The protein belongs to the UMP kinase family. As to quaternary structure, homohexamer.

The protein resides in the cytoplasm. It catalyses the reaction UMP + ATP = UDP + ADP. It participates in pyrimidine metabolism; CTP biosynthesis via de novo pathway; UDP from UMP (UMPK route): step 1/1. Its activity is regulated as follows. Allosterically activated by GTP. Inhibited by UTP. Functionally, catalyzes the reversible phosphorylation of UMP to UDP. The chain is Uridylate kinase from Streptococcus pyogenes serotype M1.